The chain runs to 545 residues: Tripartite motif-containing protein 26 (545 aa).

The RING-type zinc-finger motif lies at 16 to 57 (CSICLDYLRDPVTIDCGHVFCRSCTSDIRPISGNRPVCPLCK). The B box-type zinc finger occupies 97–138 (QDMKLCERHQEKLHYYCEDDGKLLCVMCRESREHRPHTAVLV). Residues Cys102, His105, Cys124, and His130 each contribute to the Zn(2+) site. Residues 197-243 (QFLKKREQHLLDQLATLEQLLTEGREKFKTRGVSELDRLTLVISELE) are a coiled coil. Residues 301 to 545 (RGLRQFQGKL…WPGARLLLRP (245 aa)) form the B30.2/SPRY domain. The interval 382 to 443 (REGWSEDEEE…EEEEEVQESC (62 aa)) is disordered. Acidic residues predominate over residues 386 to 440 (SEDEEEGEEEEEGEEEEEDEEVGYGDGYEDWETDEEDESLGEEEEEEEEEEEEVQ).

Belongs to the TRIM/RBCC family. As to quaternary structure, interacts with TBK1; this interaction bridges together TBK1 and NEMO in order to activate TBK1. Interacts with INCA1. Post-translationally, autoubiquitinates upon viral infection. In turn, autoubiquitinated TRIM26 recruits NEMO and bridges TBK1-NEMO interaction.

Its subcellular location is the cytoplasm. It localises to the nucleus. It carries out the reaction S-ubiquitinyl-[E2 ubiquitin-conjugating enzyme]-L-cysteine + [acceptor protein]-L-lysine = [E2 ubiquitin-conjugating enzyme]-L-cysteine + N(6)-ubiquitinyl-[acceptor protein]-L-lysine.. Functionally, E3 ubiquitin-protein ligase which regulates the IFN-beta production and antiviral response downstream of various DNA-encoded pattern-recognition receptors (PRRs). Also plays a central role in determining the response to different forms of oxidative stress by controlling levels of DNA glycosylases NEIL1, NEIL3 and NTH1 that are involved in repair of damaged DNA. Promotes nuclear IRF3 ubiquitination and proteasomal degradation. Bridges together TBK1 and NEMO during the innate response to viral infection leading to the activation of TBK1. Positively regulates LPS-mediated inflammatory innate immune response by catalyzing the 'Lys-11'-linked polyubiquitination of TAB1 to enhance its activation and subsequent NF-kappa-B and MAPK signaling. In a manner independent of its catalytic activity, inhibits WWP2, a SOX2-directed E3 ubiquitin ligase, and thus protects SOX2 from polyubiquitination and proteasomal degradation. Ubiquitinates the histone acetyltransferase protein complex component PHF20 and thereby triggers its degradation in the nucleus after its recruitment by the histone demethylase KDM6B, serving as a scaffold protein. Upon induction by TGF-beta, ubiquitinates the TFIID component TAF7 for proteasomal degradation. Induces ferroptosis by ubiquitinating SLC7A11, a critical protein for lipid reactive oxygen species (ROS) scavenging. This Mus musculus (Mouse) protein is Tripartite motif-containing protein 26 (Trim26).